The primary structure comprises 284 residues: Type II methyltransferase M1.LlaDCHI (284 aa).

Trp17, Lys21, Asp62, and Asp194 together coordinate S-adenosyl-L-methionine.

It belongs to the N(4)/N(6)-methyltransferase family.

It carries out the reaction a 2'-deoxyadenosine in DNA + S-adenosyl-L-methionine = an N(6)-methyl-2'-deoxyadenosine in DNA + S-adenosyl-L-homocysteine + H(+). Functionally, an alpha subtype methylase, recognizes the double-stranded sequence 5'-GATC-3', methylates A-2 on both strands, and protects the DNA from cleavage by the LlaDCHI endonuclease. The polypeptide is Type II methyltransferase M1.LlaDCHI (Lactococcus lactis subsp. cremoris (Streptococcus cremoris)).